The primary structure comprises 215 residues: Pyridoxine/pyridoxamine 5'-phosphate oxidase (215 aa).

Substrate-binding positions include 9 to 12 (RRDY) and lysine 69. Residues 64 to 69 (RILLLK), 79 to 80 (FT), lysine 86, and glutamine 108 contribute to the FMN site. Residues tyrosine 126, arginine 130, and serine 134 each contribute to the substrate site. FMN contacts are provided by residues 143–144 (QS) and tryptophan 188. A substrate-binding site is contributed by 194 to 196 (RLH). Arginine 198 serves as a coordination point for FMN.

This sequence belongs to the pyridoxamine 5'-phosphate oxidase family. Homodimer. FMN is required as a cofactor.

The catalysed reaction is pyridoxamine 5'-phosphate + O2 + H2O = pyridoxal 5'-phosphate + H2O2 + NH4(+). The enzyme catalyses pyridoxine 5'-phosphate + O2 = pyridoxal 5'-phosphate + H2O2. Its pathway is cofactor metabolism; pyridoxal 5'-phosphate salvage; pyridoxal 5'-phosphate from pyridoxamine 5'-phosphate: step 1/1. The protein operates within cofactor metabolism; pyridoxal 5'-phosphate salvage; pyridoxal 5'-phosphate from pyridoxine 5'-phosphate: step 1/1. Its function is as follows. Catalyzes the oxidation of either pyridoxine 5'-phosphate (PNP) or pyridoxamine 5'-phosphate (PMP) into pyridoxal 5'-phosphate (PLP). This Pseudomonas fluorescens (strain ATCC BAA-477 / NRRL B-23932 / Pf-5) protein is Pyridoxine/pyridoxamine 5'-phosphate oxidase.